The primary structure comprises 409 residues: Putative competence-damage inducible protein (409 aa).

Belongs to the CinA family.

This Clostridium tetani (strain Massachusetts / E88) protein is Putative competence-damage inducible protein.